A 148-amino-acid polypeptide reads, in one-letter code: uncharacterized protein (148 aa).

Positions 3–64 constitute an HTH asnC-type domain; that stretch reads IDDLDRKILS…KLNYEKLGYE (62 aa). Residues 22–41 constitute a DNA-binding region (H-T-H motif); the sequence is YREIAKKLNVAVGTIYNRIK.

This is an uncharacterized protein from Pyrococcus furiosus (strain ATCC 43587 / DSM 3638 / JCM 8422 / Vc1).